Reading from the N-terminus, the 151-residue chain is Globin CTT-IIIA (151 aa).

The Globin domain maps to 8–147 (SMTDAQVAAV…MFHVIFNALD (140 aa)). Histidine 98 provides a ligand contact to heme b.

The protein belongs to the globin family. In terms of assembly, monomer.

The chain is Globin CTT-IIIA from Chironomus thummi thummi (Midge).